The sequence spans 1358 residues: DNA-directed RNA polymerase subunit beta (1358 aa).

It belongs to the RNA polymerase beta chain family. As to quaternary structure, the RNAP catalytic core consists of 2 alpha, 1 beta, 1 beta' and 1 omega subunit. When a sigma factor is associated with the core the holoenzyme is formed, which can initiate transcription.

It catalyses the reaction RNA(n) + a ribonucleoside 5'-triphosphate = RNA(n+1) + diphosphate. In terms of biological role, DNA-dependent RNA polymerase catalyzes the transcription of DNA into RNA using the four ribonucleoside triphosphates as substrates. This Francisella tularensis subsp. holarctica (strain LVS) protein is DNA-directed RNA polymerase subunit beta.